A 313-amino-acid chain; its full sequence is Homoserine O-succinyltransferase (313 aa).

C142 (acyl-thioester intermediate) is an active-site residue. The substrate site is built by K163 and S192. H235 acts as the Proton acceptor in catalysis. E237 is an active-site residue. R249 contacts substrate.

Belongs to the MetA family.

The protein localises to the cytoplasm. It catalyses the reaction L-homoserine + succinyl-CoA = O-succinyl-L-homoserine + CoA. Its pathway is amino-acid biosynthesis; L-methionine biosynthesis via de novo pathway; O-succinyl-L-homoserine from L-homoserine: step 1/1. In terms of biological role, transfers a succinyl group from succinyl-CoA to L-homoserine, forming succinyl-L-homoserine. This chain is Homoserine O-succinyltransferase, found in Shewanella baltica (strain OS223).